The following is a 998-amino-acid chain: Collagen alpha-1(I) chain (998 aa).

A disordered region spans residues 1–998 (SYGYDEKGGV…GPPGPPGPPG (998 aa)). Over residues 9–22 (GVSVPGPMGPSGPR) the composition is skewed to low complexity. A 4-hydroxyproline mark is found at proline 25, proline 28, proline 30, proline 39, proline 42, proline 45, proline 59, proline 74, proline 80, proline 89, and proline 95. The span at 62–76 (NGDDGEAGKPGRPGE) shows a compositional bias: basic and acidic residues. The residue at position 98 (lysine 98) is a 5-hydroxylysine; alternate. An O-linked (Gal...) hydroxylysine; alternate glycan is attached at lysine 98. The residue at position 104 (serine 104) is a Phosphoserine. Low complexity predominate over residues 112–128 (DAGPAGPKGEPGSPGEN). Proline 122, proline 125, proline 131, proline 140, proline 146, proline 167, proline 176, proline 179, proline 206, proline 209, proline 221, proline 227, proline 236, proline 242, proline 245, and proline 260 each carry 4-hydroxyproline. A compositionally biased stretch (low complexity) spans 146–164 (PGASGPAGARGNDGATGAA). A compositionally biased stretch (pro residues) spans 166–178 (PPGPTGPAGPPGF). The segment covering 212–251 (AGAAGPAGNPGADGQPGAKGANGAPGIAGAPGFPGARGPS) has biased composition (low complexity). Lysine 263 carries the 5-hydroxylysine modification. 4-hydroxyproline occurs at positions 269, 272, 284, 293, 308, 314, 323, and 329. The segment covering 318–327 (GERGGPGSRG) has biased composition (gly residues). 5-hydroxylysine is present on lysine 338. 25 positions are modified to 4-hydroxyproline: proline 347, proline 356, proline 362, proline 368, proline 377, proline 380, proline 389, proline 398, proline 404, proline 416, proline 425, proline 434, proline 437, proline 455, proline 472, proline 478, proline 484, proline 490, proline 496, proline 502, proline 514, proline 523, proline 537, proline 543, and proline 552. Over residues 371-397 (KGLTGSPGSPGPDGKTGPPGPAGQDGR) the composition is skewed to low complexity. Residues 406–425 (ARGQAGVMGFPGPKGAAGEP) show a composition bias toward low complexity. Positions 484–493 (PGEAGKPGEQ) are enriched in low complexity. 5-hydroxylysine is present on lysine 564. 4-hydroxyproline is present on residues proline 570, proline 585, and proline 591. Low complexity predominate over residues 597–611 (SGPSGPAGPTGARGA). Serine 600 carries the phosphoserine modification. Proline 612, proline 618, proline 621, proline 630, proline 636, proline 654, proline 663, and proline 672 each carry 4-hydroxyproline. A compositionally biased stretch (low complexity) spans 624 to 651 (AGFAGPPGADGQPGAKGEPGDAGAKGDA). The segment covering 653-665 (PPGPAGPTGPPGP) has biased composition (pro residues). 5-hydroxylysine is present on lysine 675. The segment covering 680–696 (SAGPPGATGFPGAAGRV) has biased composition (low complexity). Proline 684 and proline 690 each carry 4-hydroxyproline. Residue proline 698 is modified to 3-hydroxyproline. Proline 699, proline 708, proline 711, proline 732, proline 741, proline 749, proline 758, proline 776, proline 785, proline 788, proline 794, proline 809, proline 815, proline 821, proline 830, and proline 836 each carry 4-hydroxyproline. Over residues 725-734 (ETGPAGRPGE) the composition is skewed to low complexity. Residues 746 to 758 (KGSPGADGPAGAP) are compositionally biased toward low complexity. Residues 808-818 (PPGPMGPPGLA) show a composition bias toward pro residues. Lysine 845 carries the post-translational modification 5-hydroxylysine. Over residues 853–868 (PGPPGAPGAPGAPGPV) the composition is skewed to pro residues. 4-hydroxyproline is present on residues proline 856, proline 859, and proline 862. Over residues 889–903 (AGPAGARGPAGPQGP) the composition is skewed to low complexity. Residues 904 to 918 (RGDKGETGEQGDRGI) show a composition bias toward basic and acidic residues. Lysine 907 is subject to 5-hydroxylysine. Lysine 919 bears the 5-hydroxylysine; alternate mark. An O-linked (Gal...) hydroxylysine; alternate glycan is attached at lysine 919. 4-hydroxyproline is present on residues proline 934, proline 937, proline 955, and proline 970. Residues 937 to 970 (PGEQGPSGASGPAGPRGPPGSAGSPGKDGLNGLP) are compositionally biased toward low complexity. A 3-hydroxyproline modification is found at proline 975. A 4-hydroxyproline modification is found at proline 976. Residues 988–998 (VGPPGPPGPPG) show a composition bias toward pro residues. Proline 990 bears the 3-hydroxyproline mark. A 4-hydroxyproline modification is found at proline 991. Proline 993 carries the post-translational modification 3-hydroxyproline. Proline 994 is subject to 4-hydroxyproline. Proline 996 bears the 3-hydroxyproline mark. Residue proline 997 is modified to 4-hydroxyproline.

Belongs to the fibrillar collagen family. As to quaternary structure, trimers of one alpha 2(I) and two alpha 1(I) chains. Post-translationally, contains mostly 4-hydroxyproline. Proline residues at the third position of the tripeptide repeating unit (G-X-Y) are hydroxylated in some or all of the chains. In terms of processing, contains 3-hydroxyproline at a few sites. This modification occurs on the first proline residue in the sequence motif Gly-Pro-Hyp, where Hyp is 4-hydroxyproline. Lysine residues at the third position of the tripeptide repeating unit (G-X-Y) are 5-hydroxylated in some or all of the chains. Post-translationally, O-glycosylated on hydroxylated lysine residues. The O-linked glycan consists of a Glc-Gal disaccharide. In terms of tissue distribution, expressed in bones.

It is found in the secreted. The protein localises to the extracellular space. It localises to the extracellular matrix. Functionally, type I collagen is a member of group I collagen (fibrillar forming collagen). This is Collagen alpha-1(I) chain from Nothrotheriops shastensis (Shasta ground sloth).